A 323-amino-acid chain; its full sequence is Olfactory receptor 2T35 (323 aa).

Over 1 to 26 (MGMEGLLQNSTNFVLTGLITHPAFPG) the chain is Extracellular. Asn-9 carries an N-linked (GlcNAc...) asparagine glycan. Residues 27–50 (LLFAVVFSIFVVAITANLVMILLI) traverse the membrane as a helical segment. At 51 to 58 (HMDSRLHT) the chain is on the cytoplasmic side. The chain crosses the membrane as a helical span at residues 59–80 (PMYFLLSQLSIMDTIYICITVP). Residues 81 to 101 (KMLQDLLSKDKTISFLGCAVQ) are Extracellular-facing. An intrachain disulfide couples Cys-98 to Cys-189. Residues 102–120 (IFYLTLIGGEFFLLGLMAY) traverse the membrane as a helical segment. Residues 121 to 139 (DRYVAVCNPLRYPLLMNRR) lie on the Cytoplasmic side of the membrane. The chain crosses the membrane as a helical span at residues 140–158 (VCLFMVVGSWVGGSLDGFM). Residues 159–195 (LTPVTMSFPFCRSREINHFFCEIPAVLKLSCTDTSLY) lie on the Extracellular side of the membrane. The helical transmembrane segment at 196–219 (ETLMYACCVLMLLIPLSVISVSYT) threads the bilayer. The Cytoplasmic segment spans residues 220–236 (HILLTVHRMNSAEGRRK). A helical membrane pass occupies residues 237–259 (AFATCSSHIMVVSVFYGAAFYTN). Over 260–272 (VLPHSYHTPEKDK) the chain is Extracellular. The chain crosses the membrane as a helical span at residues 273–292 (VVSAFYTILTPMLNPLIYSL). The Cytoplasmic portion of the chain corresponds to 293 to 323 (RNKDVAAALRKVLGRCGSSQSIRVATVIRKG).

Belongs to the G-protein coupled receptor 1 family.

The protein resides in the cell membrane. Its function is as follows. Odorant receptor. In Homo sapiens (Human), this protein is Olfactory receptor 2T35 (OR2T35).